Reading from the N-terminus, the 346-residue chain is MSGKFINHKTIVFGVITSVLLLLLLIYYVFKPEAQTQNQNINTQTIQPENTVLESATANNKQGKLPTLAASLQGTEIDCPIQVDANGKLILTVGIRSCFDYFFSSLGEKTEAELVADIRQYLLATLPESASNYAIYLLDQYVAYMHALQNLKPNAGFKSNNVDALQKVVDQMAKVQQQFFNAAEINALFGNERNLNQFNLEQMRIHANKNLTTQEKATELAKLIDELPPALADGVRVSMQFAELQQLTKEIQAKGGSAQDLRSMRESLLGPEAADRLEKVDQEEAVWQTQVNQYLSARDQILKSDANDASKQQSIAELRNSSFGTKEDLLRAQSYEVMHDQKSKGS.

Residues 10-30 form a helical membrane-spanning segment; that stretch reads TIVFGVITSVLLLLLLIYYVF.

The protein belongs to the lipase chaperone family.

The protein localises to the cell inner membrane. In terms of biological role, may be involved in the folding of the extracellular lipase during its passage through the periplasm. The polypeptide is Lipase chaperone (lifO) (Acinetobacter venetianus (strain ATCC 31012 / DSM 23050 / BCRC 14357 / CCUG 45561 / CIP 110063 / KCTC 2702 / LMG 19082 / RAG-1)).